The sequence spans 653 residues: ATP-dependent zinc metalloprotease FtsH 1 (653 aa).

The tract at residues 1–20 is disordered; the sequence is MPENKNDKENKNDKENKNTK. The Cytoplasmic portion of the chain corresponds to 1–30; it reads MPENKNDKENKNDKENKNTKEEKKKVKFSN. Residues 31 to 51 form a helical membrane-spanning segment; sequence IIWVYIIFAVFFIGALISLNW. Over 52–126 the chain is Periplasmic; the sequence is ENNPIISYSE…EYVESVGTKW (75 aa). The chain crosses the membrane as a helical span at residues 127–147; sequence WFGLLINIIPIVVMVLFFFWL. At 148–653 the chain is on the cytoplasmic side; sequence YRSASAGARS…VVNHVNYQPV (506 aa). An ATP-binding site is contributed by 219 to 226; that stretch reads GPPGTGKT. H441 serves as a coordination point for Zn(2+). E442 is an active-site residue. Zn(2+)-binding residues include H445 and D518.

This sequence in the central section; belongs to the AAA ATPase family. In the C-terminal section; belongs to the peptidase M41 family. As to quaternary structure, homohexamer. Requires Zn(2+) as cofactor.

The protein localises to the cell inner membrane. Acts as a processive, ATP-dependent zinc metallopeptidase for both cytoplasmic and membrane proteins. Plays a role in the quality control of integral membrane proteins. The protein is ATP-dependent zinc metalloprotease FtsH 1 of Petrotoga mobilis (strain DSM 10674 / SJ95).